The primary structure comprises 3075 residues: Lovastatin nonaketide synthase mokA (3075 aa).

The Ketosynthase family 3 (KS3) domain occupies 49 to 488; sequence NEPIVVVGSG…GTNAHAIIEE (440 aa). Residues Cys222, His361, and His408 each act as for beta-ketoacyl synthase activity in the active site. The interval 603-945 is acyl and malonyl transferase; the sequence is VFTGQGAQWP…AYLWEQFGIP (343 aa). Ser697 serves as the catalytic For malonyltransferase activity. Residues 997-1133 form an N-terminal hotdog fold region; it reads HLLLGKLSEY…GQLVVTLDEG (137 aa). Residues 997–1311 form the PKS/mFAS DH domain; sequence HLLLGKLSEY…FKPFSPPTAS (315 aa). Catalysis depends on His1029, which acts as the Proton acceptor; for dehydratase activity. The interval 1029–1041 is dehydratase-like; it reads HALQGQVVFPAAG. Positions 1156–1311 are C-terminal hotdog fold; the sequence is MNRVNINSFY…FKPFSPPTAS (156 aa). The active-site Proton donor; for dehydratase activity is the Asp1218. A methyltransferase region spans residues 1556–1594; the sequence is YDLIIASNVLHATPDLEKTMAHARSLLKPGGQMVILEIT. Positions 2176–2470 are beta-ketoacyl reductase; it reads ALPARIRPID…FKIPERRGKA (295 aa). Residues 2492-2571 enclose the Carrier domain; the sequence is DQVRQIVIDG…DLADDAAARL (80 aa). Position 2531 is an O-(pantetheine 4'-phosphoryl)serine (Ser2531). Residues 2582-2624 are disordered; the sequence is SEGGAETSDNDTSGPEGTDLSASTTITEPSSADEEDEKQEDDN. Residues 2591 to 2611 show a composition bias toward polar residues; sequence NDTSGPEGTDLSASTTITEPS. Over residues 2612–2624 the composition is skewed to acidic residues; the sequence is SADEEDEKQEDDN. Residues 2633-2989 are peptide synthetase elongation; it reads PLSLGQEYAW…AETAEPAPLF (357 aa).

The cofactor is pantetheine 4'-phosphate.

It catalyses the reaction holo-[lovastatin nonaketide synthase] + 9 malonyl-CoA + S-adenosyl-L-methionine + 11 NADPH + 19 H(+) = dihydromonacolin L-[lovastatin nonaketide synthase] + S-adenosyl-L-homocysteine + 9 CO2 + 11 NADP(+) + 9 CoA + 6 H2O. It functions in the pathway polyketide biosynthesis; lovastatin biosynthesis. In terms of biological role, nonaketide synthase; part of the gene cluster that mediates the biosynthesis of monakolin K, also known as lovastatin, and which acts as a potent competitive inhibitor of HMG-CoA reductase. Monakolin K biosynthesis is performed in two stages. The first stage is catalyzed by the nonaketide synthase mokA, which belongs to type I polyketide synthases and catalyzes the iterative nine-step formation of the polyketide. This PKS stage is completed by the action of dehydrogenase mokE, which catalyzes the NADPH-dependent reduction of the unsaturated tetra-, penta- and heptaketide intermediates that arise during the mokA-mediated biosynthesis of the nonaketide chain and leads to dihydromonacolin L. Covalently bound dihydromonacolin L is released from mokA by the mokD esterase. Conversion of dihydromonacolin L into monacolin L and then monacolin J is subsequently performed with the participation of molecular oxygen and P450 monoogygenase mokC. Finally, mokF performs the conversion of monacoline J to monacoline K through the addition of the side-chain diketide moiety (2R)-2-methylbutanoate produced by the diketide synthase mokB. The sequence is that of Lovastatin nonaketide synthase mokA from Monascus pilosus (Red mold).